Here is a 290-residue protein sequence, read N- to C-terminus: MASLKEVKTRINSVQSTRKITSAMKMVASAKLHKAQGAIENMLPYQRKLNKILTNFLSADLPVESPFCVERPVMRVAIVAFSSNSSLCGAFNANVLKMFLQTVGEYRELGQDNILIYPVGKKIEEAVKKLGFFPQGSYQKLADKPSYDEAAALAKLLMELFLEKNIDRVELIYHHFKSMGVQELLRERYLPIDLSAVQNDEERGGVVNDYIIEPSAAQLIADLIPQVLSQKIFTAALDSNASEHAARTLAMQIATDNANELIQELTKQYNKTRQQAITNELLDIVGGSMA.

The protein belongs to the ATPase gamma chain family. F-type ATPases have 2 components, CF(1) - the catalytic core - and CF(0) - the membrane proton channel. CF(1) has five subunits: alpha(3), beta(3), gamma(1), delta(1), epsilon(1). CF(0) has three main subunits: a, b and c.

It localises to the cell inner membrane. Its function is as follows. Produces ATP from ADP in the presence of a proton gradient across the membrane. The gamma chain is believed to be important in regulating ATPase activity and the flow of protons through the CF(0) complex. The polypeptide is ATP synthase gamma chain (Bacteroides fragilis (strain YCH46)).